Reading from the N-terminus, the 441-residue chain is MRLSRYFLPILRETPKEAEIVSHRLMLRAGMIRQEAAGIYAWLPLGLRVLNKVCDVVRAEQDRAGAIEILMPTIQAADLWRESGRYEAYGKEMLRLKDRHERELLYGPTAEEVVTEIFRASTRSYKDLPKNLYQISWKFRDEVRPRFGTMRSREFLMKDGYSFDIDQAAARHSYNKVFVSYLRTFERLGLRAIPMRADTGPIGGDLSHEFIILAKTGESEVFCDQAYLDMPVPPPSVDFDDVAGLQGVVDAWTSHYAATDEMHDEAVFAEVPEASRLSARGIEVGHIFYFGTKYSTPMKAVVTGPDGSERPVHMGSYGIGPSRLVAATIEASHDEAGIIWPDAIAPFDVALINLKVGDGACDTACAEIQAALETAGLSVLYDDRDERPGAKFATADLIGLPWQVIVGPKGLAEGKIELKRRASGERETLDPVDLPARIRRL.

It belongs to the class-II aminoacyl-tRNA synthetase family. ProS type 2 subfamily. In terms of assembly, homodimer.

Its subcellular location is the cytoplasm. The catalysed reaction is tRNA(Pro) + L-proline + ATP = L-prolyl-tRNA(Pro) + AMP + diphosphate. Its function is as follows. Catalyzes the attachment of proline to tRNA(Pro) in a two-step reaction: proline is first activated by ATP to form Pro-AMP and then transferred to the acceptor end of tRNA(Pro). The sequence is that of Proline--tRNA ligase from Methylorubrum extorquens (strain PA1) (Methylobacterium extorquens).